Here is a 382-residue protein sequence, read N- to C-terminus: Layilin (382 aa).

A signal peptide spans 1–21 (MRPGTALQAVLLAVLLVGLRA). The Extracellular segment spans residues 22-235 (ATGRLLSASD…SREAALNLAY (214 aa)). Residues 45–185 (TQRPCYKVIY…CNMKNNFICK (141 aa)) form the C-type lectin domain. 2 disulfides stabilise this stretch: Cys-71-Cys-184 and Cys-150-Cys-176. N-linked (GlcNAc...) asparagine glycosylation occurs at Asn-117. Residues 236–256 (ILIPSIPLLLLLVVTTVVCWV) form a helical membrane-spanning segment. Topologically, residues 257 to 382 (WICRKRKREQ…GWVENEIYGY (126 aa)) are cytoplasmic. Positions 266–285 (QPDPSTKKQHTIWPSPHQGN) are disordered. A phosphoserine mark is found at Ser-286 and Ser-299. Residues 330–374 (DYDNMAVNPSESGFVTLVSVESGFVTNDIYEFSPDQMGRSKESGW) form an interaction with NF2 region. The segment at 337 to 382 (NPSESGFVTLVSVESGFVTNDIYEFSPDQMGRSKESGWVENEIYGY) is interaction with TLN1. 5 repeat units span residues 340–344 (ESGFV), 350–354 (ESGFV), 356–359 (NDIY), 371–375 (ESGWV), and 377–380 (NEIY). The segment at 340 to 375 (ESGFVTLVSVESGFVTNDIYEFSPDQMGRSKESGWV) is 3 X 5 AA repeats of E-S-G-X-V. Positions 356-380 (NDIYEFSPDQMGRSKESGWVENEIY) are 2 X 4 AA repeats of N-X-I-Y.

In terms of assembly, interacts with NF2, RDX and TLN1.

The protein resides in the membrane. Receptor for hyaluronate. The sequence is that of Layilin (LAYN) from Homo sapiens (Human).